The sequence spans 335 residues: Agamous-like MADS-box protein AGL104 (335 aa).

One can recognise an MADS-box domain in the interval 1–61 (MGRVKLEIKR…DRLSLFSGKT (61 aa)). Positions 124 to 151 (SDVEELEHEVCRLQQQLQMAEEELRRYE) form a coiled coil. Residues 302-335 (MPAQQSDIPGVTAETQVDHEVSDYETKVPQLSSQ) are disordered. The segment covering 317-327 (QVDHEVSDYET) has biased composition (basic and acidic residues).

As to quaternary structure, forms heterodimers with AGL30 and AGL65. As to expression, expressed in pollen.

The protein resides in the nucleus. In terms of biological role, probable transcription factor that forms heterodimers with the MADS-box proteins AGL30 and AGL65 and is involved in the regulation of pollen maturation at the late stages of pollen development and pollen tube growth. The sequence is that of Agamous-like MADS-box protein AGL104 from Arabidopsis thaliana (Mouse-ear cress).